Reading from the N-terminus, the 127-residue chain is uncharacterized protein (127 aa).

Residues 1–46 (MEVGLSPSACLRRIKLMEQAGVIRGYTALVDPTQSESTIAVIINIT) enclose the HTH asnC-type domain.

Functionally, not known, symbiotically active. This is an uncharacterized protein from Sinorhizobium fredii (strain NBRC 101917 / NGR234).